A 952-amino-acid polypeptide reads, in one-letter code: Aminopeptidase 2, mitochondrial (952 aa).

The transit peptide at 1 to 52 directs the protein to the mitochondrion; sequence MPIVRWLLLKSAVRGSSLIGKAHPCLRSIAAHPRYLSNVYSPPAGVSRSLRI. Substrate contacts are provided by residues glutamate 228 and 360–364; that span reads GAMEN. An N-linked (GlcNAc...) asparagine glycan is attached at asparagine 381. Histidine 396 is a Zn(2+) binding site. Residue glutamate 397 is the Proton acceptor of the active site. Zn(2+)-binding residues include histidine 400 and glutamate 419. N-linked (GlcNAc...) asparagine glycosylation is present at asparagine 713.

This sequence belongs to the peptidase M1 family. Requires Zn(2+) as cofactor.

Its subcellular location is the periplasm. It is found in the cytoplasm. The protein localises to the mitochondrion. Its function is as follows. Involved in the cellular supply of leucine from externally offered leucine-containing dipeptide substrates. The protein is Aminopeptidase 2, mitochondrial (APE2) of Saccharomyces cerevisiae (strain ATCC 204508 / S288c) (Baker's yeast).